The primary structure comprises 196 residues: Large ribosomal subunit protein bL9 (196 aa).

Belongs to the bacterial ribosomal protein bL9 family.

In terms of biological role, binds to the 23S rRNA. The protein is Large ribosomal subunit protein bL9 of Bradyrhizobium sp. (strain ORS 278).